The chain runs to 121 residues: Ribosome-binding factor A (121 aa).

This sequence belongs to the RbfA family. Monomer. Binds 30S ribosomal subunits, but not 50S ribosomal subunits or 70S ribosomes.

The protein localises to the cytoplasm. Its function is as follows. One of several proteins that assist in the late maturation steps of the functional core of the 30S ribosomal subunit. Associates with free 30S ribosomal subunits (but not with 30S subunits that are part of 70S ribosomes or polysomes). Required for efficient processing of 16S rRNA. May interact with the 5'-terminal helix region of 16S rRNA. This chain is Ribosome-binding factor A, found in Lactobacillus helveticus (strain DPC 4571).